Consider the following 232-residue polypeptide: Ubiquinone biosynthesis O-methyltransferase (232 aa).

Residues arginine 36, glycine 55, aspartate 76, and leucine 120 each coordinate S-adenosyl-L-methionine.

It belongs to the methyltransferase superfamily. UbiG/COQ3 family.

It catalyses the reaction a 3-demethylubiquinol + S-adenosyl-L-methionine = a ubiquinol + S-adenosyl-L-homocysteine + H(+). The enzyme catalyses a 3-(all-trans-polyprenyl)benzene-1,2-diol + S-adenosyl-L-methionine = a 2-methoxy-6-(all-trans-polyprenyl)phenol + S-adenosyl-L-homocysteine + H(+). It functions in the pathway cofactor biosynthesis; ubiquinone biosynthesis. Functionally, O-methyltransferase that catalyzes the 2 O-methylation steps in the ubiquinone biosynthetic pathway. This chain is Ubiquinone biosynthesis O-methyltransferase, found in Pseudomonas putida (strain W619).